Here is a 679-residue protein sequence, read N- to C-terminus: MNGRKLPDGGVLYDDTDESEDEIEVEGDVSAAPLAVAVDWNAGSLNETGLVGAELIGEFVKRLPNSPGVYRMLNAEGDVLYVGKARSLKKRVGNYAVGRVHSNRIAQMVRQTANMEFVTTRTETEALLLEANLIKRLRPRFNVLLRDDKSFPYILITGDHRAPAIFKHRGARARKGDYFGPFASAGAVGRTINSLQRAFLIRTCTDSVFETRTRPCLLYQIKRCSGPCTHEVSDEGYAELVQEAKDFLSGKSQKVKSHMAEAMNQAAEDLDFERAAIYRDRLAALSHVQSHQGINPAGVDEADVFAIHHEGGVSCIQVFFFRTGQNWGNRAYFPKADPQLSSAEVLNAFLAQFYDDKPVPKQIMLSETAEELELLAAALSEKAGHKVSILVPRRGEKRDLVDHVVGNAREAHGRKLAETASQSRLLEGFKETFGLAYAPQRIEIYDNSHIMGTNAVGGMVVAGPEGFVKNQYRKFNIKSTDITPGDDFGMMKEVMTRRFSRLIKEEGIPDRTAQAAAADAADMPFPAWPDVILIDGGQGQMTAVRAILAELGITDSVTAIGIAKGVDRDAGRERFFAPGRESFTLPPRDPVLYFIQRMRDEAHRFAIGSHRVRRKKEMVKNPLDEIGGIGPSRKRALLQHFGTAKAVSRAALSDLMAVEGISEAVAKQVYNHFHEDAAK.

The GIY-YIG domain maps to 65–143 (NSPGVYRMLN…IKRLRPRFNV (79 aa)). The UVR domain maps to 253 to 288 (QKVKSHMAEAMNQAAEDLDFERAAIYRDRLAALSHV).

Belongs to the UvrC family. As to quaternary structure, interacts with UvrB in an incision complex.

It is found in the cytoplasm. Functionally, the UvrABC repair system catalyzes the recognition and processing of DNA lesions. UvrC both incises the 5' and 3' sides of the lesion. The N-terminal half is responsible for the 3' incision and the C-terminal half is responsible for the 5' incision. In Rhizobium etli (strain ATCC 51251 / DSM 11541 / JCM 21823 / NBRC 15573 / CFN 42), this protein is UvrABC system protein C.